A 203-amino-acid polypeptide reads, in one-letter code: ATP-dependent Clp protease proteolytic subunit (203 aa).

Catalysis depends on Ser107, which acts as the Nucleophile. His132 is a catalytic residue.

This sequence belongs to the peptidase S14 family. In terms of assembly, fourteen ClpP subunits assemble into 2 heptameric rings which stack back to back to give a disk-like structure with a central cavity, resembling the structure of eukaryotic proteasomes.

The protein resides in the cytoplasm. The enzyme catalyses Hydrolysis of proteins to small peptides in the presence of ATP and magnesium. alpha-casein is the usual test substrate. In the absence of ATP, only oligopeptides shorter than five residues are hydrolyzed (such as succinyl-Leu-Tyr-|-NHMec, and Leu-Tyr-Leu-|-Tyr-Trp, in which cleavage of the -Tyr-|-Leu- and -Tyr-|-Trp bonds also occurs).. In terms of biological role, cleaves peptides in various proteins in a process that requires ATP hydrolysis. Has a chymotrypsin-like activity. Plays a major role in the degradation of misfolded proteins. This chain is ATP-dependent Clp protease proteolytic subunit, found in Shewanella piezotolerans (strain WP3 / JCM 13877).